Reading from the N-terminus, the 166-residue chain is Phospholipase A2 inhibitor clone 05 (166 aa).

An N-terminal signal peptide occupies residues Met-1–Gly-19. Positions Leu-46 to Glu-161 constitute a C-type lectin domain. 2 disulfide bridges follow: Cys-83–Cys-160 and Cys-138–Cys-152. Residue Asn-122 is glycosylated (N-linked (GlcNAc...) asparagine).

Belongs to the alpha-type phospholipase A2 inhibitor family. In terms of assembly, homotrimer; non-covalently linked. Expressed by the liver.

The protein resides in the secreted. Functionally, this phospholipase A2 inhibitor binds directly phospholipase A2 in the presence or absence of calcium. The chain is Phospholipase A2 inhibitor clone 05 from Bothrops moojeni (Lance-headed viper).